A 221-amino-acid chain; its full sequence is MKAAIYHAFSHKEAKDHDVQELGSQRAEAFVRAFLKQSIPHMSQEDCESHLQRKAVILEYFTRLKPRPRPKKKSKGLSAKQRRDMRLFDIKPEQQRYSLFLPLHELWKQYIRDLCNGLKPDTQPQMIQAKLLKADLHGAIISVTKSKCPSYVGVTGILLQETKHVFKIITREDHLKVIPKLNCVFTIEIDDFISYIYGSKFQLRASERSAKKFKAKGSIDL.

Phosphoserine is present on serine 10.

It belongs to the eukaryotic/archaeal RNase P protein component 1 family. In terms of assembly, component of nuclear RNase P and RNase MRP ribonucleoproteins. RNase P consists of a catalytic RNA moiety and 10 different protein chains; POP1, POP4, POP5, POP7, RPP14, RPP21, RPP25, RPP30, RPP38 and RPP40. Within the RNase P complex, POP1, POP7 and RPP25 form the 'finger' subcomplex, POP5, RPP14, RPP40 and homodimeric RPP30 form the 'palm' subcomplex, and RPP21, POP4 and RPP38 form the 'wrist' subcomplex. All subunits of the RNase P complex interact with the catalytic RNA. Several subunits of RNase P are also part of the RNase MRP complex. RNase MRP consists of a catalytic RNA moiety and about 8 protein subunits; POP1, POP7, RPP25, RPP30, RPP38, RPP40 and possibly also POP4 and POP5.

It localises to the nucleus. The protein localises to the nucleolus. Component of ribonuclease P, a ribonucleoprotein complex that generates mature tRNA molecules by cleaving their 5'-ends. In Mus musculus (Mouse), this protein is Ribonuclease P protein subunit p29 (Pop4).